Consider the following 689-residue polypeptide: PR domain zinc finger protein 8 (689 aa).

Positions 16 to 131 constitute an SET domain; that stretch reads KAVQQCLTDI…KDEELLVWYG (116 aa). Residue Tyr-130 participates in S-adenosyl-L-methionine binding. Residues 155–183 form a C2H2-type 1 zinc finger; it reads YTCLECSQRFQFEFPYVAHLRFRCPKRLH. Disordered stretches follow at residues 185–333 and 397–506; these read ADIS…VGGR and SLQE…QPAR. The segment covering 193 to 210 has biased composition (gly residues); it reads QGGGVGTKDHGGGGGGGK. Low complexity-rich tracts occupy residues 241-258 and 273-286; these read PESS…AKPS and GGSS…LSSG. Residues 322–333 show a composition bias toward gly residues; that stretch reads EGGGGAGLVGGR. Positions 423–433 are enriched in low complexity; the sequence is STPAAASPVGA. Residues 472-491 show a composition bias toward gly residues; sequence TSGGGGTGAGAAGGAGGGQG. 2 C2H2-type zinc fingers span residues 625 to 648 and 666 to 688; these read NWCA…RSHH and LKCP…MTSH.

The protein belongs to the class V-like SAM-binding methyltransferase superfamily. Interacts with EPM2A and NHLRC1. This interaction sequesters EPM2A and NHLRC1 to the nucleus. Interacts with BHLHE22. In terms of tissue distribution, expressed in brain, heart, skeletal muscle, testes, prostate.

It is found in the nucleus. Functionally, probable histone methyltransferase, preferentially acting on 'Lys-9' of histone H3. Involved in the control of steroidogenesis through transcriptional repression of steroidogenesis marker genes such as CYP17A1 and LHCGR. Forms with BHLHE22 a transcriptional repressor complex controlling genes involved in neural development and neuronal differentiation. In the retina, it is required for rod bipolar and type 2 OFF-cone bipolar cell survival. This is PR domain zinc finger protein 8 (PRDM8) from Homo sapiens (Human).